The primary structure comprises 341 residues: Transcription factor VIP1 (341 aa).

3 disordered regions span residues 1 to 33 (MEGG…HRRA), 59 to 106 (SLDF…PEAR), and 135 to 156 (SSGE…DGEM). Positions 1–162 (MEGGGRGPNQ…DGEMSSASFN (162 aa)) are necessary and sufficient for transient T-DNA transformation end expression. Basic and acidic residues predominate over residues 15 to 24 (EIEHMPEAPR). Residues 71 to 80 (QSQQQPQASP) are compositionally biased toward low complexity. Serine 79 is modified (phosphoserine). An involved in homomultimerization and histone H2A binding region spans residues 163–341 (IESILASVSG…PSYMDFTKRG (179 aa)). Residues 194–257 (DPKRAKRILA…SELNTENKHL (64 aa)) form the bZIP domain. The segment at 196–217 (KRAKRILANRQSAARSKERKIR) is basic motif. A Nuclear localization signal motif is present at residues 198 to 205 (AKRILANR). The leucine-zipper stretch occupies residues 222–257 (LERKVQTLQNEATTLSAQVTMLQRGTSELNTENKHL). Residues 307–331 (SQQSAMNQFGNKTNQQMSTNGQPSL) show a composition bias toward polar residues. The segment at 307-341 (SQQSAMNQFGNKTNQQMSTNGQPSLPSYMDFTKRG) is disordered.

This sequence belongs to the bZIP family. Forms homomultimers. Interacts with Agrobacterium tumefaciens VirE2 and mediates its translocation to the host nucleus. Binds to VIP2. Forms a complex made of Agrobacterium VirE2, VIP1, VIP2 and single-stranded DNA (ssDNA). The interaction with KAP1 mediates its nuclear import. Binds to the H2A histone RAT5. Interacts with MPK3 and Agrobacterium virF. Forms a complex made of VIP1, VBF and Agrobacterium virE2. Interacts with SCF(VBF) E3 ubiquitin ligase complex. Binds directly to VBF. Forms heterodimers with BZIP34 and BZIP61. In terms of processing, phosphorylated by MPK3. This phosphorylation promotes nuclear localization. In terms of tissue distribution, mostly expressed in dividing cells, present in leaves, roots and seedlings.

It is found in the cytoplasm. The protein localises to the nucleus. Functionally, transcription activator that binds specifically to the VIP1 response elements (VREs) DNA sequence 5'-ACNGCT-3' found in some stress genes (e.g. TRX8 and MYB44), when phosphorylated/activated by MPK3. Required for Agrobacterium VirE2 nuclear import and tumorigenicity. Promotes transient expression of T-DNA in early stages by interacting with VirE2 in complex with the T-DNA and facilitating its translocation to the nucleus, and mediates stable genetic transformation by Agrobacterium by binding H2A histone. Prevents cell differentiation and shoot formation. Limits sulfate utilization efficiency (SUE) and sulfate uptake, especially in low-sulfur conditions. Plays a role in osmosensory response by binding to the 5'-AGCTGT/G-3' DNA sequence found in the promoters of the hypoosmolarity-responsive genes CYP707A1 and CYP707A3. Involved in the negative regulation of touch-induced root bending and salt-dependent root bending. The chain is Transcription factor VIP1 from Arabidopsis thaliana (Mouse-ear cress).